The following is a 312-amino-acid chain: tRNA uridine(34) hydroxylase (312 aa).

The Rhodanese domain maps to Ser123–Ser217. Cys177 (cysteine persulfide intermediate) is an active-site residue. The span at Ala282–Arg293 shows a compositional bias: basic and acidic residues. The segment at Ala282 to Asn312 is disordered.

This sequence belongs to the TrhO family.

The catalysed reaction is uridine(34) in tRNA + AH2 + O2 = 5-hydroxyuridine(34) in tRNA + A + H2O. Catalyzes oxygen-dependent 5-hydroxyuridine (ho5U) modification at position 34 in tRNAs. In Pseudomonas paraeruginosa (strain DSM 24068 / PA7) (Pseudomonas aeruginosa (strain PA7)), this protein is tRNA uridine(34) hydroxylase.